The following is a 374-amino-acid chain: Queuine tRNA-ribosyltransferase (374 aa).

The active-site Proton acceptor is Asp89. Substrate is bound by residues 89–93, Asp143, Gln187, and Gly214; that span reads DSGGF. The segment at 245 to 251 is RNA binding; it reads GVGKPED. The Nucleophile role is filled by Asp264. The tract at residues 269-273 is RNA binding; important for wobble base 34 recognition; it reads TRNAR. Zn(2+) is bound by residues Cys302, Cys304, Cys307, and His333.

It belongs to the queuine tRNA-ribosyltransferase family. In terms of assembly, homodimer. Within each dimer, one monomer is responsible for RNA recognition and catalysis, while the other monomer binds to the replacement base PreQ1. The cofactor is Zn(2+).

The enzyme catalyses 7-aminomethyl-7-carbaguanine + guanosine(34) in tRNA = 7-aminomethyl-7-carbaguanosine(34) in tRNA + guanine. Its pathway is tRNA modification; tRNA-queuosine biosynthesis. Functionally, catalyzes the base-exchange of a guanine (G) residue with the queuine precursor 7-aminomethyl-7-deazaguanine (PreQ1) at position 34 (anticodon wobble position) in tRNAs with GU(N) anticodons (tRNA-Asp, -Asn, -His and -Tyr). Catalysis occurs through a double-displacement mechanism. The nucleophile active site attacks the C1' of nucleotide 34 to detach the guanine base from the RNA, forming a covalent enzyme-RNA intermediate. The proton acceptor active site deprotonates the incoming PreQ1, allowing a nucleophilic attack on the C1' of the ribose to form the product. After dissociation, two additional enzymatic reactions on the tRNA convert PreQ1 to queuine (Q), resulting in the hypermodified nucleoside queuosine (7-(((4,5-cis-dihydroxy-2-cyclopenten-1-yl)amino)methyl)-7-deazaguanosine). This is Queuine tRNA-ribosyltransferase from Shewanella loihica (strain ATCC BAA-1088 / PV-4).